A 291-amino-acid polypeptide reads, in one-letter code: Probable 2-(5''-triphosphoribosyl)-3'-dephosphocoenzyme-A synthase (291 aa).

It belongs to the CitG/MdcB family.

It carries out the reaction 3'-dephospho-CoA + ATP = 2'-(5''-triphospho-alpha-D-ribosyl)-3'-dephospho-CoA + adenine. Its function is as follows. Involved in the formation of 2-(5''-phosphoribosyl)-3'-dephosphocoenzyme-A, the prosthetic group of the acyl-carrier protein of the malonate decarboxylase. This chain is Probable 2-(5''-triphosphoribosyl)-3'-dephosphocoenzyme-A synthase, found in Pseudomonas savastanoi pv. phaseolicola (strain 1448A / Race 6) (Pseudomonas syringae pv. phaseolicola (strain 1448A / Race 6)).